Consider the following 470-residue polypeptide: SHUGOSHIN 2 (470 aa).

A coiled-coil region spans residues 72-113; that stretch reads IQKLRINLRSVQEKNLQLAQANSQMLAELNTNRDRLKDLQHE. 2 stretches are compositionally biased toward basic and acidic residues: residues 131 to 143 and 150 to 162; these read VLPR…KDKV and GDCK…DIKH. 2 disordered regions span residues 131-176 and 358-470; these read VLPR…IKSS and ESAG…RRKC. Over residues 163-172 the composition is skewed to basic residues; the sequence is KDTKRKRTTR. A compositionally biased stretch (basic and acidic residues) spans 370–381; it reads SESRHETKEITR. A compositionally biased stretch (basic residues) spans 382 to 392; sequence KRSFSTRRQST. Basic and acidic residues-rich tracts occupy residues 396-406, 423-438, and 449-462; these read SQTDEAIKEIA, TESK…EGMT, and HAAE…EVSL.

Belongs to the shugoshin family.

Dispensable for both meiotic and mitotic cell cycle progression. Required with SGO1 for full protection of centromeric cohesion during anaphase I. Required to prevent precocious release of pericentromeric cohesins during meiosis. Acts redundantly to SGO1. The chain is SHUGOSHIN 2 from Arabidopsis thaliana (Mouse-ear cress).